A 312-amino-acid chain; its full sequence is Phospholipid phosphatase 3 (312 aa).

Over 1–33 (MQSYKYDKAIVPESKNGGSPALNNNPRKGGSKR) the chain is Cytoplasmic. A Phosphoserine modification is found at Ser-19. Residues 34-54 (VLLICLDLFCLFMAALPFLII) form a helical membrane-spanning segment. Topologically, residues 55-85 (ETSTIKPYRRGFYCNDESIKYPLKVSETIND) are extracellular. The chain crosses the membrane as a helical span at residues 86–106 (AVLCAVGIVIAILRIITGEFY). Over 107–123 (RIYYLKEKSRSTIQNPY) the chain is Cytoplasmic. The Dityrosine basolateral targeting motif signature appears at 109 to 110 (YY). Residues 124-144 (VAALYKQVGCFLFGCAISQSF) form a helical membrane-spanning segment. Residues 145–194 (TDIAKVSIGRLRPHFLSVCDPDFSQINCSEGYIQNYRCRGEDSKVQEARK) are Extracellular-facing. The phosphatase sequence motif I stretch occupies residues 149–157 (KVSIGRLRP). Residue Asn-171 is glycosylated (N-linked (GlcNAc...) asparagine). An Integrin-binding motif motif is present at residues 183 to 185 (RGE). A helical membrane pass occupies residues 195–215 (SFFSGHASFSMFTMLYLVLYL). Residues 197 to 200 (FSGH) are phosphatase sequence motif II. The active-site Proton donors is His-200. Over 216-226 (QARFTWRGARL) the chain is Cytoplasmic. A helical membrane pass occupies residues 227–244 (LRPLLQFTLLMMAFYTGL). The segment at 245 to 256 (SRVSDYKHHPSD) is phosphatase sequence motif III. Residues 245-258 (SRVSDYKHHPSDVL) lie on the Extracellular side of the membrane. The active-site Nucleophile is the His-252. Residues 259–279 (AGFAQGALVACCIVFFVSDLF) traverse the membrane as a helical segment. The mediates interaction with CTNND1 stretch occupies residues 276–312 (SDLFKTKTTLSLPAPAIRREILSPVDIMDRSNHHNMV). The Cytoplasmic segment spans residues 280-312 (KTKTTLSLPAPAIRREILSPVDIMDRSNHHNMV).

The protein belongs to the PA-phosphatase related phosphoesterase family. As to quaternary structure, forms functional homodimers and homooligomers that are not required for substrate recognition and catalytic activity. Can also form heterooligomers with other PLPP2 and PLPP3. Interacts with CTNND1; negatively regulates the PLPP3-mediated stabilization of beta-catenin/CTNNB1. Post-translationally, N-glycosylated. Contains high-mannose oligosaccharides. In terms of tissue distribution, detected in epithelial cells of intestinal mucosa, lung, liver and brain.

Its subcellular location is the cell membrane. The protein resides in the basolateral cell membrane. The protein localises to the endoplasmic reticulum membrane. It is found in the endoplasmic reticulum-Golgi intermediate compartment membrane. It localises to the golgi apparatus membrane. Its subcellular location is the golgi apparatus. The protein resides in the trans-Golgi network membrane. The protein localises to the membrane raft. It carries out the reaction a 1,2-diacyl-sn-glycero-3-phosphate + H2O = a 1,2-diacyl-sn-glycerol + phosphate. The enzyme catalyses 1,2-dihexadecanoyl-sn-glycero-3-phosphate + H2O = 1,2-dihexadecanoyl-sn-glycerol + phosphate. The catalysed reaction is 1,2-di-(9Z-octadecenoyl)-sn-glycero-3-phosphate + H2O = 1,2-di-(9Z-octadecenoyl)-sn-glycerol + phosphate. It catalyses the reaction a monoacyl-sn-glycero-3-phosphate + H2O = a monoacylglycerol + phosphate. It carries out the reaction (9Z)-octadecenoyl-sn-glycero-3-phosphate + H2O = (9Z-octadecenoyl)-glycerol + phosphate. The enzyme catalyses sphing-4-enine 1-phosphate + H2O = sphing-4-enine + phosphate. The catalysed reaction is an N-acylsphing-4-enine 1-phosphate + H2O = an N-acylsphing-4-enine + phosphate. It catalyses the reaction N-(octanoyl)-sphing-4-enine-1-phosphate + H2O = N-octanoylsphing-4-enine + phosphate. It carries out the reaction N-(9Z-octadecenoyl)-ethanolamine phosphate + H2O = N-(9Z-octadecenoyl) ethanolamine + phosphate. The protein operates within lipid metabolism; phospholipid metabolism. Magnesium-independent phospholipid phosphatase. Insensitive to N-ethylmaleimide. Inhibited by sphingosine, zinc ions and modestly by propanolol. Its function is as follows. Magnesium-independent phospholipid phosphatase of the plasma membrane that catalyzes the dephosphorylation of a variety of glycerolipid and sphingolipid phosphate esters including phosphatidate/PA, lysophosphatidate/LPA, diacylglycerol pyrophosphate/DGPP, sphingosine 1-phosphate/S1P and ceramide 1-phosphate/C1P. Also acts on N-oleoyl ethanolamine phosphate/N-(9Z-octadecenoyl)-ethanolamine phosphate, a potential physiological compound. Has both an extracellular and an intracellular phosphatase activity, allowing the hydrolysis and the cellular uptake of these bioactive lipid mediators from the milieu, regulating signal transduction in different cellular processes. Through the dephosphorylation of extracellular sphingosine-1-phosphate and the regulation of its extra- and intracellular availability, plays a role in vascular homeostasis, regulating endothelial cell migration, adhesion, survival, proliferation and the production of pro-inflammatory cytokines. By maintaining the appropriate levels of this lipid in the cerebellum, also ensure its proper development and function. Through its intracellular lipid phosphatase activity may act in early compartments of the secretory pathway, regulating the formation of Golgi to endoplasmic reticulum retrograde transport carriers. In terms of biological role, independently of this phosphatase activity may also function in the Wnt signaling pathway and the stabilization of beta-catenin/CTNNB1, thereby regulating cell proliferation, migration and differentiation in angiogenesis or yet in tumor growth. Also plays a role in integrin-mediated cell-cell adhesion in angiogenesis. This chain is Phospholipid phosphatase 3, found in Rattus norvegicus (Rat).